Consider the following 372-residue polypeptide: Innexin-16 (372 aa).

The next 4 helical transmembrane spans lie at Val-31–Gly-51, Val-106–Ile-126, Leu-181–Phe-201, and Ile-263–Val-283. An N-linked (GlcNAc...) asparagine glycan is attached at Asn-352.

This sequence belongs to the pannexin family.

The protein localises to the cell membrane. Its subcellular location is the cell junction. It localises to the gap junction. In terms of biological role, structural component of the gap junctions. Required for signals downstream of defecation clock. This is Innexin-16 (inx-16) from Caenorhabditis elegans.